We begin with the raw amino-acid sequence, 330 residues long: Glycerol-3-phosphate dehydrogenase [NAD(P)+] (330 aa).

NADPH is bound by residues Ser10, Trp11, Arg31, and Lys105. Sn-glycerol 3-phosphate-binding residues include Lys105, Gly135, and Ser137. Residue Ala139 participates in NADPH binding. Residues Lys190, Asp243, Ser253, Arg254, and Asn255 each coordinate sn-glycerol 3-phosphate. Residue Lys190 is the Proton acceptor of the active site. Arg254 serves as a coordination point for NADPH. 2 residues coordinate NADPH: Val278 and Glu280.

It belongs to the NAD-dependent glycerol-3-phosphate dehydrogenase family.

It is found in the cytoplasm. The catalysed reaction is sn-glycerol 3-phosphate + NAD(+) = dihydroxyacetone phosphate + NADH + H(+). It carries out the reaction sn-glycerol 3-phosphate + NADP(+) = dihydroxyacetone phosphate + NADPH + H(+). It functions in the pathway membrane lipid metabolism; glycerophospholipid metabolism. In terms of biological role, catalyzes the reduction of the glycolytic intermediate dihydroxyacetone phosphate (DHAP) to sn-glycerol 3-phosphate (G3P), the key precursor for phospholipid synthesis. This is Glycerol-3-phosphate dehydrogenase [NAD(P)+] from Nitratidesulfovibrio vulgaris (strain ATCC 29579 / DSM 644 / CCUG 34227 / NCIMB 8303 / VKM B-1760 / Hildenborough) (Desulfovibrio vulgaris).